The primary structure comprises 401 residues: E3 ubiquitin-protein ligase DA2 (401 aa).

Residues 59–102 (CPICFLYYPSLNRSRCCMKSICTECFLQMKNPNSARPTQCPFCK) form an RING-type; degenerate zinc finger. Over residues 139–153 (KEMQDDEEKMQKRLE) the composition is skewed to basic and acidic residues. The interval 139-164 (KEMQDDEEKMQKRLESCSSSTSAMTG) is disordered.

In terms of assembly, interacts with DA1 (via C-terminus).

It carries out the reaction S-ubiquitinyl-[E2 ubiquitin-conjugating enzyme]-L-cysteine + [acceptor protein]-L-lysine = [E2 ubiquitin-conjugating enzyme]-L-cysteine + N(6)-ubiquitinyl-[acceptor protein]-L-lysine.. The protein operates within protein modification; protein ubiquitination. In terms of biological role, E3 ubiquitin-protein ligase involved in the regulation of organ and seed size. Acts synergistically with DA1 to regulate seed size. Functions synergistically with DA1 to restrict cell proliferation in the maternal integuments of ovules and developing seeds. Seems to function independently of BB. Possesses E3 ubiquitin-protein ligase activity in vitro. Polyubiquitinates DA1, DAR1 and DAR2, but not DAR3. This Arabidopsis thaliana (Mouse-ear cress) protein is E3 ubiquitin-protein ligase DA2.